Consider the following 70-residue polypeptide: Small, acid-soluble spore protein 1 (70 aa).

This sequence belongs to the alpha/beta-type SASP family.

In terms of biological role, SASP are bound to spore DNA. They are double-stranded DNA-binding proteins that cause DNA to change to an a-like conformation. They protect the DNA backbone from chemical and enzymatic cleavage and are thus involved in dormant spore's high resistance to UV light. In Geobacillus stearothermophilus (Bacillus stearothermophilus), this protein is Small, acid-soluble spore protein 1 (sasP-1).